The primary structure comprises 312 residues: Urease accessory protein 7 (312 aa).

Positions 28–86 are disordered; it reads QEATGTDSHHAHHHHTPSGASSAISHTHDNMPHDHGQFHDHGPGLWTPEEHGHTHEHLE. A histine rich nickel-binding domain region spans residues 36 to 87; it reads HHAHHHHTPSGASSAISHTHDNMPHDHGQFHDHGPGLWTPEEHGHTHEHLEH. The segment covering 53–86 has biased composition (basic and acidic residues); it reads HTHDNMPHDHGQFHDHGPGLWTPEEHGHTHEHLE. The GTP binding P-loop motif lies at 115–122; the sequence is GPVGSGKT. A Switch domain 1 motif is present at residues 147–154; that stretch reads TREDQEFL. The switch domain 2 motif lies at 171–172; the sequence is GG.

Belongs to the SIMIBI class G3E GTPase family. UreG subfamily. As to quaternary structure, URE4, URE6 and URE7 may form a complex that acts as a GTP-hydrolysis-dependent molecular chaperone, activating the urease apoprotein URE1.

Functionally, urease accessory protein that binds 2 nickel atoms likely via its conserved histidine-rich domain and supplies nickel for the functional urease URE1. Has probably a dual function as a nickel chaperone and GTPase. Plays a role in host brain invasion. In Cryptococcus neoformans var. grubii serotype A (strain H99 / ATCC 208821 / CBS 10515 / FGSC 9487) (Filobasidiella neoformans var. grubii), this protein is Urease accessory protein 7.